We begin with the raw amino-acid sequence, 46 residues long: MKGQLNLRSETTALSLKQGEVAFITAGAAYEVEGLIEGYAVVAKLP.

This is an uncharacterized protein from Haemophilus influenzae (strain ATCC 51907 / DSM 11121 / KW20 / Rd).